A 178-amino-acid chain; its full sequence is Large ribosomal subunit protein bL17 (178 aa).

Residues 150-178 form a disordered region; sequence PADEPVVAEENAPQSAVKDAVDECEGKAD. Residues 168-178 are compositionally biased toward basic and acidic residues; it reads DAVDECEGKAD.

Belongs to the bacterial ribosomal protein bL17 family. Part of the 50S ribosomal subunit. Contacts protein L32.

In Geobacter metallireducens (strain ATCC 53774 / DSM 7210 / GS-15), this protein is Large ribosomal subunit protein bL17.